The chain runs to 802 residues: Lon protease (802 aa).

Residues 17–211 (SIVMPLFEVV…LFLHILTKHK (195 aa)) form the Lon N-terminal domain. 363 to 370 (GPPGTGKT) is an ATP binding site. The Lon proteolytic domain maps to 600–780 (ENVPGVVTGL…EEVLREALDI (181 aa)). Catalysis depends on residues Ser686 and Lys729.

The protein belongs to the peptidase S16 family. As to quaternary structure, homohexamer. Organized in a ring with a central cavity.

The protein resides in the cytoplasm. It carries out the reaction Hydrolysis of proteins in presence of ATP.. Its function is as follows. ATP-dependent serine protease that mediates the selective degradation of mutant and abnormal proteins as well as certain short-lived regulatory proteins. Required for cellular homeostasis and for survival from DNA damage and developmental changes induced by stress. Degrades polypeptides processively to yield small peptide fragments that are 5 to 10 amino acids long. Binds to DNA in a double-stranded, site-specific manner. This chain is Lon protease, found in Methanosarcina barkeri (strain Fusaro / DSM 804).